Here is a 463-residue protein sequence, read N- to C-terminus: Glutamate--tRNA ligase 1 (463 aa).

Positions 10 to 20 (PSPTGFLHIGS) match the 'HIGH' region motif. The 'KMSKS' region signature appears at 239 to 243 (KLSKR). An ATP-binding site is contributed by lysine 242.

Belongs to the class-I aminoacyl-tRNA synthetase family. Glutamate--tRNA ligase type 1 subfamily. Monomer.

The protein localises to the cytoplasm. The enzyme catalyses tRNA(Glu) + L-glutamate + ATP = L-glutamyl-tRNA(Glu) + AMP + diphosphate. In terms of biological role, catalyzes the attachment of glutamate to tRNA(Glu) in a two-step reaction: glutamate is first activated by ATP to form Glu-AMP and then transferred to the acceptor end of tRNA(Glu). The polypeptide is Glutamate--tRNA ligase 1 (Rickettsia canadensis (strain McKiel)).